Reading from the N-terminus, the 232-residue chain is tRNA (guanine-N(7)-)-methyltransferase (232 aa).

Residues Glu-38, Asp-63, Glu-90, and Asp-113 each contribute to the S-adenosyl-L-methionine site. Asp-113 is an active-site residue. 2 residues coordinate substrate: Lys-117 and Asp-149.

This sequence belongs to the class I-like SAM-binding methyltransferase superfamily. TrmB family.

It carries out the reaction guanosine(46) in tRNA + S-adenosyl-L-methionine = N(7)-methylguanosine(46) in tRNA + S-adenosyl-L-homocysteine. It participates in tRNA modification; N(7)-methylguanine-tRNA biosynthesis. Catalyzes the formation of N(7)-methylguanine at position 46 (m7G46) in tRNA. The protein is tRNA (guanine-N(7)-)-methyltransferase of Syntrophotalea carbinolica (strain DSM 2380 / NBRC 103641 / GraBd1) (Pelobacter carbinolicus).